We begin with the raw amino-acid sequence, 581 residues long: NADH-quinone oxidoreductase subunit C/D (581 aa).

Residues methionine 1–phenylalanine 172 form an NADH dehydrogenase I subunit C region. Positions glutamate 196–arginine 581 are NADH dehydrogenase I subunit D.

In the N-terminal section; belongs to the complex I 30 kDa subunit family. This sequence in the C-terminal section; belongs to the complex I 49 kDa subunit family. In terms of assembly, NDH-1 is composed of 13 different subunits. Subunits NuoB, CD, E, F, and G constitute the peripheral sector of the complex.

The protein localises to the cell inner membrane. The enzyme catalyses a quinone + NADH + 5 H(+)(in) = a quinol + NAD(+) + 4 H(+)(out). Its function is as follows. NDH-1 shuttles electrons from NADH, via FMN and iron-sulfur (Fe-S) centers, to quinones in the respiratory chain. The immediate electron acceptor for the enzyme in this species is believed to be ubiquinone. Couples the redox reaction to proton translocation (for every two electrons transferred, four hydrogen ions are translocated across the cytoplasmic membrane), and thus conserves the redox energy in a proton gradient. This is NADH-quinone oxidoreductase subunit C/D from Rhodopseudomonas palustris (strain BisB5).